Here is a 433-residue protein sequence, read N- to C-terminus: Adenylosuccinate synthetase (433 aa).

GTP contacts are provided by residues 13-19 (GDEGKGK) and 41-43 (GHT). D14 acts as the Proton acceptor in catalysis. Residues D14 and G41 each coordinate Mg(2+). Residues 14–17 (DEGK), 39–42 (NAGH), T130, R144, Q225, T240, and R304 each bind IMP. H42 (proton donor) is an active-site residue. A substrate-binding site is contributed by 300–306 (STTGRKR). GTP is bound by residues R306, 332–334 (KLD), and 414–416 (STG).

The protein belongs to the adenylosuccinate synthetase family. Homodimer. It depends on Mg(2+) as a cofactor.

The protein resides in the cytoplasm. It carries out the reaction IMP + L-aspartate + GTP = N(6)-(1,2-dicarboxyethyl)-AMP + GDP + phosphate + 2 H(+). The protein operates within purine metabolism; AMP biosynthesis via de novo pathway; AMP from IMP: step 1/2. Plays an important role in the de novo pathway of purine nucleotide biosynthesis. Catalyzes the first committed step in the biosynthesis of AMP from IMP. The polypeptide is Adenylosuccinate synthetase (Buchnera aphidicola subsp. Acyrthosiphon pisum (strain Tuc7)).